The following is a 390-amino-acid chain: uncharacterized protein (390 aa).

The 111-residue stretch at 215-325 folds into the Glutaredoxin domain; the sequence is SRFKRKTLGK…KLIKDCEMVE (111 aa).

This is an uncharacterized protein from Arabidopsis thaliana (Mouse-ear cress).